The chain runs to 401 residues: Nicotinate phosphoribosyltransferase (401 aa).

The residue at position 221 (H221) is a Phosphohistidine; by autocatalysis.

Belongs to the NAPRTase family. Post-translationally, transiently phosphorylated on a His residue during the reaction cycle. Phosphorylation strongly increases the affinity for substrates and increases the rate of nicotinate D-ribonucleotide production. Dephosphorylation regenerates the low-affinity form of the enzyme, leading to product release.

It carries out the reaction nicotinate + 5-phospho-alpha-D-ribose 1-diphosphate + ATP + H2O = nicotinate beta-D-ribonucleotide + ADP + phosphate + diphosphate. The protein operates within cofactor biosynthesis; NAD(+) biosynthesis; nicotinate D-ribonucleotide from nicotinate: step 1/1. Its function is as follows. Catalyzes the synthesis of beta-nicotinate D-ribonucleotide from nicotinate and 5-phospho-D-ribose 1-phosphate at the expense of ATP. This chain is Nicotinate phosphoribosyltransferase, found in Serratia proteamaculans (strain 568).